We begin with the raw amino-acid sequence, 163 residues long: Small heat shock protein C4 (163 aa).

The 111-residue stretch at 53–163 (YNNKILSPRT…QSKAKKIKIS (111 aa)) folds into the sHSP domain.

The protein belongs to the small heat shock protein (HSP20) family.

The sequence is that of Small heat shock protein C4 (hspc4-1) from Rickettsia felis (strain ATCC VR-1525 / URRWXCal2) (Rickettsia azadi).